We begin with the raw amino-acid sequence, 442 residues long: Tubby-related protein 3 (442 aa).

A required for association with the IFT complex A (IFT-A) region spans residues 23 to 68; sequence MRQAKLDYQRLLLEKRQRKKRLEPFMVQPNPEARLRRAKPRASDEQ. Residues 101–177 are disordered; sequence PSVSSSVVEE…TSGSATAAQP (77 aa). Polar residues predominate over residues 145-162; the sequence is GISQSACLERPNSASSQN. A compositionally biased stretch (low complexity) spans 163–175; that stretch reads STDTGTSGSATAA.

Belongs to the TUB family. As to quaternary structure, associates with the IFT complex A (IFT-A). Interacts with SIRT1. Expressed at high levels in testis, ovaries, thyroid, and spinal cord.

The protein resides in the nucleus. The protein localises to the cell membrane. Its subcellular location is the cell projection. It localises to the cilium. It is found in the cytoplasm. The protein resides in the secreted. Negative regulator of the Shh signaling transduction pathway: recruited to primary cilia via association with the IFT complex A (IFT-A) and is required for recruitment of G protein-coupled receptor GPR161 to cilia, a promoter of PKA-dependent basal repression machinery in Shh signaling. Binds to phosphorylated inositide (phosphoinositide) lipids. Both IFT-A- and phosphoinositide-binding properties are required to regulate ciliary G protein-coupled receptor trafficking. During adipogenesis, regulates ciliary trafficking of FFAR4 in preadipocytes. In Homo sapiens (Human), this protein is Tubby-related protein 3.